The primary structure comprises 209 residues: Amelotin (209 aa).

The signal sequence occupies residues 1-16 (MRSTILLFCLLGSTRS). A disordered region spans residues 142–209 (AGANPDVQDG…ATTESANGIQ (68 aa)).

It belongs to the amelotin family. Phosphorylated by FAM20C in vitro. Post-translationally, O-glycosylated.

Its subcellular location is the secreted. In terms of biological role, is a promoter of calcium phosphate mineralization, playing a critical role in the formation of the compact, mineralized, aprismatic enamel surface layer during the maturation stage of amelogenesis. This Homo sapiens (Human) protein is Amelotin (AMTN).